The sequence spans 390 residues: Probable galacturonosyltransferase-like 9 (390 aa).

Over 1-10 (MRLRFPMKSA) the chain is Cytoplasmic. A helical; Signal-anchor for type II membrane protein membrane pass occupies residues 11 to 31 (VLAFAIFLVFIPLFSVGIRMI). Topologically, residues 32–390 (PGRLTAVSAT…SELTEDSSFF (359 aa)) are lumenal. Residues N205 and N223 are each glycosylated (N-linked (GlcNAc...) asparagine).

This sequence belongs to the glycosyltransferase 8 family.

The protein localises to the golgi apparatus membrane. The protein operates within glycan metabolism; pectin biosynthesis. In terms of biological role, may be involved in pectin and/or xylans biosynthesis in cell walls. The chain is Probable galacturonosyltransferase-like 9 (GATL9) from Arabidopsis thaliana (Mouse-ear cress).